We begin with the raw amino-acid sequence, 375 residues long: Erythronate-4-phosphate dehydrogenase (375 aa).

Ser-45 and Thr-66 together coordinate substrate. Positions 146 and 175 each coordinate NAD(+). Arg-208 is an active-site residue. Asp-232 serves as a coordination point for NAD(+). Glu-237 is a catalytic residue. His-254 acts as the Proton donor in catalysis. Gly-257 contacts NAD(+). A substrate-binding site is contributed by Tyr-258.

This sequence belongs to the D-isomer specific 2-hydroxyacid dehydrogenase family. PdxB subfamily. In terms of assembly, homodimer.

The protein localises to the cytoplasm. The enzyme catalyses 4-phospho-D-erythronate + NAD(+) = (R)-3-hydroxy-2-oxo-4-phosphooxybutanoate + NADH + H(+). Its pathway is cofactor biosynthesis; pyridoxine 5'-phosphate biosynthesis; pyridoxine 5'-phosphate from D-erythrose 4-phosphate: step 2/5. Catalyzes the oxidation of erythronate-4-phosphate to 3-hydroxy-2-oxo-4-phosphonooxybutanoate. The protein is Erythronate-4-phosphate dehydrogenase of Yersinia enterocolitica serotype O:8 / biotype 1B (strain NCTC 13174 / 8081).